A 388-amino-acid polypeptide reads, in one-letter code: Succinate--CoA ligase [ADP-forming] subunit beta (388 aa).

The 236-residue stretch at 9–244 folds into the ATP-grasp domain; sequence KQLFSRYGLP…PSQEDPREAQ (236 aa). ATP-binding positions include K46, 53–55, E99, T102, and E107; that span reads GRG. Residues N199 and D213 each coordinate Mg(2+). Substrate is bound by residues N264 and 321–323; that span reads GIV.

Belongs to the succinate/malate CoA ligase beta subunit family. Heterotetramer of two alpha and two beta subunits. Requires Mg(2+) as cofactor.

The catalysed reaction is succinate + ATP + CoA = succinyl-CoA + ADP + phosphate. The enzyme catalyses GTP + succinate + CoA = succinyl-CoA + GDP + phosphate. It participates in carbohydrate metabolism; tricarboxylic acid cycle; succinate from succinyl-CoA (ligase route): step 1/1. In terms of biological role, succinyl-CoA synthetase functions in the citric acid cycle (TCA), coupling the hydrolysis of succinyl-CoA to the synthesis of either ATP or GTP and thus represents the only step of substrate-level phosphorylation in the TCA. The beta subunit provides nucleotide specificity of the enzyme and binds the substrate succinate, while the binding sites for coenzyme A and phosphate are found in the alpha subunit. This Proteus mirabilis (strain HI4320) protein is Succinate--CoA ligase [ADP-forming] subunit beta.